Here is a 1203-residue protein sequence, read N- to C-terminus: DNA-directed RNA polymerase subunit beta' (1203 aa).

The Zn(2+) site is built by Cys60, Cys62, Cys75, and Cys78. Mg(2+) is bound by residues Asp449, Asp451, and Asp453. Zn(2+) contacts are provided by Cys818, Cys892, Cys899, and Cys902.

The protein belongs to the RNA polymerase beta' chain family. As to quaternary structure, the RNAP catalytic core consists of 2 alpha, 1 beta, 1 beta' and 1 omega subunit. When a sigma factor is associated with the core the holoenzyme is formed, which can initiate transcription. Mg(2+) is required as a cofactor. It depends on Zn(2+) as a cofactor.

The enzyme catalyses RNA(n) + a ribonucleoside 5'-triphosphate = RNA(n+1) + diphosphate. In terms of biological role, DNA-dependent RNA polymerase catalyzes the transcription of DNA into RNA using the four ribonucleoside triphosphates as substrates. This is DNA-directed RNA polymerase subunit beta' from Bacillus cereus (strain ZK / E33L).